Here is a 2380-residue protein sequence, read N- to C-terminus: Probable polyketide synthase 25 (2380 aa).

Residues 1–18 (MDNSYLNNPQFDINNGNK) show a composition bias toward polar residues. The interval 1-29 (MDNSYLNNPQFDINNGNKEVTDDDNNKNN) is disordered. Residues 31-457 (DNLVAIVGVG…GSNCCLVLSQ (427 aa)) enclose the Ketosynthase family 3 (KS3) domain. Active-site for beta-ketoacyl synthase activity residues include cysteine 198, histidine 340, and histidine 380. The segment at 649–682 (GIKASFMLGHSLGEVTTAYCSGMIDIDQLCYLIY) is acyl/malonyl transferase. The active-site For acyl/malonyl transferase activity is serine 659. Residues 948-1070 (ISILGNSMQD…ANFQLYNNGK (123 aa)) form an N-terminal hotdog fold region. Residues 948 to 1234 (ISILGNSMQD…CTSLTPVKDP (287 aa)) form the PKS/mFAS DH domain. Histidine 982 serves as the catalytic Proton acceptor; for dehydratase activity. The C-terminal hotdog fold stretch occupies residues 1085 to 1234 (NLSSIPWDKF…CTSLTPVKDP (150 aa)). The active-site Proton donor; for dehydratase activity is aspartate 1148. In terms of domain architecture, Carrier spans 2299 to 2376 (KNSTNIKDKF…MVCQIINDNF (78 aa)). At serine 2336 the chain carries O-(pantetheine 4'-phosphoryl)serine.

The cofactor is pantetheine 4'-phosphate.

Functionally, probable polyketide synthase. This is Probable polyketide synthase 25 (pks25) from Dictyostelium discoideum (Social amoeba).